The sequence spans 224 residues: Large ribosomal subunit protein uL4 (224 aa).

The segment at 53-74 is disordered; sequence RNRSEVSHSTKKPFKQKGTGNA.

Belongs to the universal ribosomal protein uL4 family. As to quaternary structure, part of the 50S ribosomal subunit.

One of the primary rRNA binding proteins, this protein initially binds near the 5'-end of the 23S rRNA. It is important during the early stages of 50S assembly. It makes multiple contacts with different domains of the 23S rRNA in the assembled 50S subunit and ribosome. In terms of biological role, forms part of the polypeptide exit tunnel. In Chlamydia pneumoniae (Chlamydophila pneumoniae), this protein is Large ribosomal subunit protein uL4.